A 252-amino-acid chain; its full sequence is tRNA (guanine-N(1)-)-methyltransferase (252 aa).

S-adenosyl-L-methionine contacts are provided by residues Gly-113 and 133-138 (IGDYVL).

The protein belongs to the RNA methyltransferase TrmD family. In terms of assembly, homodimer.

Its subcellular location is the cytoplasm. The enzyme catalyses guanosine(37) in tRNA + S-adenosyl-L-methionine = N(1)-methylguanosine(37) in tRNA + S-adenosyl-L-homocysteine + H(+). Functionally, specifically methylates guanosine-37 in various tRNAs. This is tRNA (guanine-N(1)-)-methyltransferase from Xanthomonas campestris pv. campestris (strain B100).